Consider the following 339-residue polypeptide: Glycerol-3-phosphate dehydrogenase [NAD(P)+] (339 aa).

NADPH is bound by residues S15, Y16, H36, and K110. Residues K110, G139, and T141 each coordinate sn-glycerol 3-phosphate. Position 143 (A143) interacts with NADPH. Residues K195, D248, S258, R259, and N260 each contribute to the sn-glycerol 3-phosphate site. Residue K195 is the Proton acceptor of the active site. R259 lines the NADPH pocket. NADPH is bound by residues V283 and E285.

It belongs to the NAD-dependent glycerol-3-phosphate dehydrogenase family.

It localises to the cytoplasm. It carries out the reaction sn-glycerol 3-phosphate + NAD(+) = dihydroxyacetone phosphate + NADH + H(+). The enzyme catalyses sn-glycerol 3-phosphate + NADP(+) = dihydroxyacetone phosphate + NADPH + H(+). The protein operates within membrane lipid metabolism; glycerophospholipid metabolism. In terms of biological role, catalyzes the reduction of the glycolytic intermediate dihydroxyacetone phosphate (DHAP) to sn-glycerol 3-phosphate (G3P), the key precursor for phospholipid synthesis. The protein is Glycerol-3-phosphate dehydrogenase [NAD(P)+] of Shigella flexneri serotype 5b (strain 8401).